Here is a 518-residue protein sequence, read N- to C-terminus: Chromosomal replication initiator protein DnaA (518 aa).

The segment at 1 to 72 is domain I, interacts with DnaA modulators; it reads MTLAEFWPLC…VREELAAGRS (72 aa). Residues 72–180 form a domain II region; that stretch reads SAFVFKPGEG…DAEEARYEQT (109 aa). The interval 145–178 is disordered; it reads EPRQAAGSASRPESAAVAKARTDAQRDAEEARYE. Basic and acidic residues predominate over residues 164–177; the sequence is ARTDAQRDAEEARY. The domain III, AAA+ region stretch occupies residues 181–397; sequence NLSPDYTFDT…GAFNRVGASS (217 aa). The ATP site is built by glycine 225, glycine 227, lysine 228, and threonine 229. The domain IV, binds dsDNA stretch occupies residues 398 to 518; that stretch reads RFMNRPVIDI…YEKLLILIQN (121 aa).

The protein belongs to the DnaA family. Oligomerizes as a right-handed, spiral filament on DNA at oriC.

It is found in the cytoplasm. Functionally, plays an essential role in the initiation and regulation of chromosomal replication. ATP-DnaA binds to the origin of replication (oriC) to initiate formation of the DNA replication initiation complex once per cell cycle. Binds the DnaA box (a 9 base pair repeat at the origin) and separates the double-stranded (ds)DNA. Forms a right-handed helical filament on oriC DNA; dsDNA binds to the exterior of the filament while single-stranded (ss)DNA is stabiized in the filament's interior. The ATP-DnaA-oriC complex binds and stabilizes one strand of the AT-rich DNA unwinding element (DUE), permitting loading of DNA polymerase. After initiation quickly degrades to an ADP-DnaA complex that is not apt for DNA replication. Binds acidic phospholipids. The polypeptide is Chromosomal replication initiator protein DnaA (Neisseria meningitidis serogroup A / serotype 4A (strain DSM 15465 / Z2491)).